The following is a 121-amino-acid chain: Non-structural protein 8 (121 aa).

Positions 1 to 15 (MKLLIVFGLLTSVYC) are cleaved as a signal peptide. In terms of domain architecture, SARS ORF8 Ig-like spans 19 to 121 (ECSIQECCEN…HDVRVVLDFV (103 aa)). 3 cysteine pairs are disulfide-bonded: cysteine 25/cysteine 90, cysteine 37/cysteine 102, and cysteine 61/cysteine 83.

This chain is Non-structural protein 8, found in Bat coronavirus Rp3/2004 (BtCoV/Rp3/2004).